A 303-amino-acid chain; its full sequence is Mesenteric estrogen-dependent adipogenesis protein (303 aa).

Highly expressed in the visceral fat depot.

The protein localises to the cytoplasm. In terms of biological role, involved in processes that promote adipocyte differentiation, lipid accumulation, and glucose uptake in mature adipocytes. The chain is Mesenteric estrogen-dependent adipogenesis protein (MEDAG) from Homo sapiens (Human).